Here is a 448-residue protein sequence, read N- to C-terminus: Solute carrier family 52, riboflavin transporter, member 1 (448 aa).

5 helical membrane passes run 14-34 (LLVA…WVEL), 47-67 (LPSY…VVTL), 79-99 (VPIQ…APLW), 124-144 (ACCT…PPFL), and 147-167 (FFLG…VQGV). N-linked (GlcNAc...) asparagine glycosylation is present at Asn178. The helical transmembrane segment at 191 to 211 (FPASTFFWALTALLVTSAAAF) threads the bilayer. Positions 225-267 (TTGGSGPELQLGSPGAEEEEKEEEEALPLQEPPSQAAGTIPGP) are disordered. Residues 240 to 250 (AEEEEKEEEEA) are compositionally biased toward acidic residues. 5 consecutive transmembrane segments (helical) span residues 280–300 (AFLL…LPSV), 315–335 (LAVV…MGVL), 342–362 (LVGL…LAIL), 369–389 (VGTT…LCVF), and 407–427 (ALLA…GAMF).

This sequence belongs to the riboflavin transporter family. Widely expressed. Highly expressed in the testis, placenta and small intestine. Expressed at lower level in other tissues.

The protein localises to the cell membrane. The catalysed reaction is riboflavin(in) = riboflavin(out). Its activity is regulated as follows. The activity is strongly inhibited by riboflavin analogs, such as lumiflavin. Weakly inhibited by flavin adenine dinucleotide (FAD). Plasma membrane transporter mediating the uptake by cells of the water soluble vitamin B2/riboflavin that plays a key role in biochemical oxidation-reduction reactions of the carbohydrate, lipid, and amino acid metabolism. Humans are unable to synthesize vitamin B2/riboflavin and must obtain it via intestinal absorption. In terms of biological role, (Microbial infection) May function as a cell receptor to retroviral envelopes similar to the porcine endogenous retrovirus (PERV-A). The protein is Solute carrier family 52, riboflavin transporter, member 1 of Homo sapiens (Human).